The sequence spans 75 residues: Tautomerase PptA (75 aa).

Proline 2 serves as the catalytic Proton acceptor; via imino nitrogen.

This sequence belongs to the 4-oxalocrotonate tautomerase family. PptA subfamily. Homodimer.

It is found in the cytoplasm. The sequence is that of Tautomerase PptA from Escherichia coli O139:H28 (strain E24377A / ETEC).